The sequence spans 147 residues: Cytochrome b-c1 complex subunit 6, mitochondrial (147 aa).

Residues 25-89 form a disordered region; sequence AEDDDNEQHE…DLREHFKNTE (65 aa). The span at 41-78 shows a compositional bias: acidic residues; sequence EEKEEENGDEDEDEDEDEDDDDDDDEDEEEEEEVTDQL. The segment covering 79 to 89 has biased composition (basic and acidic residues); sequence EDLREHFKNTE. C101 and C123 are oxidised to a cystine.

This sequence belongs to the UQCRH/QCR6 family. In terms of assembly, component of the ubiquinol-cytochrome c oxidoreductase (cytochrome b-c1 complex, complex III, CIII), a multisubunit enzyme composed of 10 subunits. The complex is composed of 3 respiratory subunits cytochrome b (COB), cytochrome c1 (CYT1) and Rieske protein (RIP1), 2 core protein subunits COR1 and QCR2, and 5 low-molecular weight protein subunits QCR6, QCR7, QCR8, QCR9 and QCR10. The complex exists as an obligatory dimer and forms supercomplexes (SCs) in the inner mitochondrial membrane with a monomer or a dimer of cytochrome c oxidase (complex IV, CIV), resulting in 2 different assemblies (supercomplexes III(2)IV and III(2)IV(2)). QCR6 interacts with COX5A at the CIII-CIV interface.

Its subcellular location is the mitochondrion inner membrane. Its function is as follows. Component of the ubiquinol-cytochrome c oxidoreductase, a multisubunit transmembrane complex that is part of the mitochondrial electron transport chain which drives oxidative phosphorylation. The respiratory chain contains 3 multisubunit complexes succinate dehydrogenase (complex II, CII), ubiquinol-cytochrome c oxidoreductase (cytochrome b-c1 complex, complex III, CIII) and cytochrome c oxidase (complex IV, CIV), that cooperate to transfer electrons derived from NADH and succinate to molecular oxygen, creating an electrochemical gradient over the inner membrane that drives transmembrane transport and the ATP synthase. The cytochrome b-c1 complex catalyzes electron transfer from ubiquinol to cytochrome c, linking this redox reaction to translocation of protons across the mitochondrial inner membrane, with protons being carried across the membrane as hydrogens on the quinol. In the process called Q cycle, 2 protons are consumed from the matrix, 4 protons are released into the intermembrane space and 2 electrons are passed to cytochrome c. This is Cytochrome b-c1 complex subunit 6, mitochondrial (QCR6) from Saccharomyces cerevisiae (strain ATCC 204508 / S288c) (Baker's yeast).